The following is a 215-amino-acid chain: Ribonuclease T (215 aa).

In terms of domain architecture, Exonuclease spans 20–194 (VVIDVETAGF…YDTEQTAQLF (175 aa)). Positions 23, 25, 181, and 186 each coordinate Mg(2+). Catalysis depends on H181, which acts as the Proton donor/acceptor.

This sequence belongs to the RNase T family. As to quaternary structure, homodimer. The cofactor is Mg(2+).

Its function is as follows. Trims short 3' overhangs of a variety of RNA species, leaving a one or two nucleotide 3' overhang. Responsible for the end-turnover of tRNA: specifically removes the terminal AMP residue from uncharged tRNA (tRNA-C-C-A). Also appears to be involved in tRNA biosynthesis. The protein is Ribonuclease T of Klebsiella pneumoniae subsp. pneumoniae (strain ATCC 700721 / MGH 78578).